A 185-amino-acid polypeptide reads, in one-letter code: Ribonuclease M5 1 (185 aa).

A Toprim domain is found at 4–87; that stretch reads KEVIVVEGKD…AFLTKHDAAP (84 aa). Mg(2+) contacts are provided by E10, D56, and D58.

It belongs to the ribonuclease M5 family. Mg(2+) is required as a cofactor.

It localises to the cytoplasm. It catalyses the reaction Endonucleolytic cleavage of RNA, removing 21 and 42 nucleotides, respectively, from the 5'- and 3'-termini of a 5S-rRNA precursor.. Functionally, required for correct processing of both the 5' and 3' ends of 5S rRNA precursor. Cleaves both sides of a double-stranded region yielding mature 5S rRNA in one step. The sequence is that of Ribonuclease M5 1 from Ligilactobacillus salivarius (strain UCC118) (Lactobacillus salivarius).